The following is a 210-amino-acid chain: Pyridoxine/pyridoxamine 5'-phosphate oxidase (210 aa).

Substrate is bound by residues 7 to 10 (REDY) and K65. FMN is bound by residues 60-65 (RMVLLK), 75-76 (FT), R81, K82, and Q104. Substrate is bound by residues Y122, R126, and S130. FMN-binding positions include 139–140 (QS) and W183. Residue 189–191 (RLH) coordinates substrate. R193 provides a ligand contact to FMN.

This sequence belongs to the pyridoxamine 5'-phosphate oxidase family. Homodimer. FMN is required as a cofactor.

It catalyses the reaction pyridoxamine 5'-phosphate + O2 + H2O = pyridoxal 5'-phosphate + H2O2 + NH4(+). It carries out the reaction pyridoxine 5'-phosphate + O2 = pyridoxal 5'-phosphate + H2O2. The protein operates within cofactor metabolism; pyridoxal 5'-phosphate salvage; pyridoxal 5'-phosphate from pyridoxamine 5'-phosphate: step 1/1. It functions in the pathway cofactor metabolism; pyridoxal 5'-phosphate salvage; pyridoxal 5'-phosphate from pyridoxine 5'-phosphate: step 1/1. Functionally, catalyzes the oxidation of either pyridoxine 5'-phosphate (PNP) or pyridoxamine 5'-phosphate (PMP) into pyridoxal 5'-phosphate (PLP). In Neisseria meningitidis serogroup A / serotype 4A (strain DSM 15465 / Z2491), this protein is Pyridoxine/pyridoxamine 5'-phosphate oxidase.